The chain runs to 753 residues: Polyribonucleotide nucleotidyltransferase (753 aa).

Positions 523 and 529 each coordinate Mg(2+). Residues 589-648 (PRIISVRIPVDKIGAVIGPKGAMINQIQDDTGADITIEDDGTVLIGATDGASAEAARSAV) form the KH domain. Residues 660–732 (GERYLGTVVK…DRGKLSLSPV (73 aa)) form the S1 motif domain. The interval 733-753 (GAESDAVAETADAIESSQTEA) is disordered.

Belongs to the polyribonucleotide nucleotidyltransferase family. It depends on Mg(2+) as a cofactor.

Its subcellular location is the cytoplasm. It catalyses the reaction RNA(n+1) + phosphate = RNA(n) + a ribonucleoside 5'-diphosphate. In terms of biological role, involved in mRNA degradation. Catalyzes the phosphorolysis of single-stranded polyribonucleotides processively in the 3'- to 5'-direction. This Micrococcus luteus (strain ATCC 4698 / DSM 20030 / JCM 1464 / CCM 169 / CCUG 5858 / IAM 1056 / NBRC 3333 / NCIMB 9278 / NCTC 2665 / VKM Ac-2230) (Micrococcus lysodeikticus) protein is Polyribonucleotide nucleotidyltransferase.